Here is a 313-residue protein sequence, read N- to C-terminus: Calcium homeostasis modulator protein 6 (313 aa).

The Cytoplasmic portion of the chain corresponds to 1 to 21 (MEKFKAVLDLQRKHRNALGYS). Residues 22–37 (LVTLLTAGGEKIFSSV) traverse the membrane as a helical segment. Topologically, residues 38-46 (VFQCPCTAT) are extracellular. 3 disulfides stabilise this stretch: Cys-41–Cys-125, Cys-43–Cys-154, and Cys-138–Cys-145. The helical transmembrane segment at 47–68 (WNLPYGLVFLLVPALALFLLGY) threads the bilayer. The Cytoplasmic segment spans residues 69–101 (ALSARTWRLLTGCCSRSARFSSGLRSAFVCAQL). Residues 102–126 (SMTAAFAPLTWVAVALLEGSFYQCA) form a helical membrane-spanning segment. Residues 127 to 167 (VSGSARLAPYLCKGRDPNCNATLPQAPCNKQKVEMQEILSQ) lie on the Extracellular side of the membrane. Residues 168–190 (LKAQSQVFGWILIAAVIILLLLV) form a helical membrane-spanning segment. Over 191-313 (KSVTRCFSPV…DMSMTNTHEL (123 aa)) the chain is Cytoplasmic.

The protein belongs to the CALHM family. Oligomerizes to form decameric and undecameric channels. N-glycosylated. Immune cells in primary and secondary lymphoid organs.

Its subcellular location is the cell membrane. It carries out the reaction ATP(in) = ATP(out). Its activity is regulated as follows. Inhibited by Gd(3+). Partially inhibited by divalent ions Ca(2+) and Ba(2+). Pore-forming subunit of an ATP-permeable channel. In response to pathogen-derived and proinflammatory stimuli, relocates from intracellular compartments to NK-dendritic cell and NK-macrophage immune synapses where it mediates ATP efflux and NK cell activation involved in antimicrobial and antitumor responses. May assemble to form gap junction channel-like structures with gating and ion conductance likely regulated by membrane lipids and voltage rather than by extracellular calcium levels. This is Calcium homeostasis modulator protein 6 from Mus musculus (Mouse).